A 200-amino-acid polypeptide reads, in one-letter code: Ciliary neurotrophic factor (200 aa).

Belongs to the CNTF family. In terms of tissue distribution, nervous system.

The protein localises to the cytoplasm. CNTF is a survival factor for various neuronal cell types. Seems to prevent the degeneration of motor axons after axotomy. The protein is Ciliary neurotrophic factor (Cntf) of Rattus norvegicus (Rat).